The primary structure comprises 572 residues: Proline--tRNA ligase (572 aa).

This sequence belongs to the class-II aminoacyl-tRNA synthetase family. ProS type 1 subfamily. In terms of assembly, homodimer.

It localises to the cytoplasm. It carries out the reaction tRNA(Pro) + L-proline + ATP = L-prolyl-tRNA(Pro) + AMP + diphosphate. Catalyzes the attachment of proline to tRNA(Pro) in a two-step reaction: proline is first activated by ATP to form Pro-AMP and then transferred to the acceptor end of tRNA(Pro). As ProRS can inadvertently accommodate and process non-cognate amino acids such as alanine and cysteine, to avoid such errors it has two additional distinct editing activities against alanine. One activity is designated as 'pretransfer' editing and involves the tRNA(Pro)-independent hydrolysis of activated Ala-AMP. The other activity is designated 'posttransfer' editing and involves deacylation of mischarged Ala-tRNA(Pro). The misacylated Cys-tRNA(Pro) is not edited by ProRS. This is Proline--tRNA ligase from Yersinia pestis bv. Antiqua (strain Antiqua).